A 446-amino-acid polypeptide reads, in one-letter code: Butyryl-CoA:acetate CoA-transferase (446 aa).

Residue glycine 220–methionine 224 participates in CoA binding. Glutamate 245 (5-glutamyl coenzyme A thioester intermediate) is an active-site residue. CoA contacts are provided by valine 320, glycine 343, and lysine 370.

The protein belongs to the acetyl-CoA hydrolase/transferase family. Butyryl-CoA CoA-transferase subfamily.

It catalyses the reaction butanoate + acetyl-CoA = butanoyl-CoA + acetate. It carries out the reaction propanoate + acetyl-CoA = propanoyl-CoA + acetate. The protein operates within lipid metabolism; butanoate metabolism. In terms of biological role, coenzyme A-transferase that converts butyryl-CoA to butyrate. Can also use proprionyl-CoA as substrate in vitro. This is Butyryl-CoA:acetate CoA-transferase from Anaerostipes caccae (strain DSM 14662 / CCUG 47493 / JCM 13470 / NCIMB 13811 / L1-92).